The chain runs to 565 residues: NAD-dependent malic enzyme (565 aa).

Tyrosine 104 serves as the catalytic Proton donor. Residue arginine 157 participates in NAD(+) binding. The Proton acceptor role is filled by lysine 175. 3 residues coordinate a divalent metal cation: glutamate 246, aspartate 247, and aspartate 270. NAD(+) contacts are provided by aspartate 270 and asparagine 418.

The protein belongs to the malic enzymes family. As to quaternary structure, homotetramer. Mg(2+) serves as cofactor. The cofactor is Mn(2+).

The catalysed reaction is (S)-malate + NAD(+) = pyruvate + CO2 + NADH. It catalyses the reaction oxaloacetate + H(+) = pyruvate + CO2. This is NAD-dependent malic enzyme from Pectobacterium carotovorum subsp. carotovorum (strain PC1).